We begin with the raw amino-acid sequence, 487 residues long: Acetyl-coenzyme A carboxylase carboxyl transferase subunit beta, chloroplastic (487 aa).

Residues 180–201 form a disordered region; it reads SRNSSENEGSSKRTRTKGSDLT. Residues 218-487 enclose the CoA carboxyltransferase N-terminal domain; that stretch reads LWVQCENCYG…PLNQKSSKIK (270 aa). Cysteine 222, cysteine 225, cysteine 241, and cysteine 244 together coordinate Zn(2+). The C4-type zinc-finger motif lies at 222 to 244; sequence CENCYGLNYKKFLKSKMNICEQC.

This sequence belongs to the AccD/PCCB family. As to quaternary structure, acetyl-CoA carboxylase is a heterohexamer composed of biotin carboxyl carrier protein, biotin carboxylase and 2 subunits each of ACCase subunit alpha and ACCase plastid-coded subunit beta (accD). The cofactor is Zn(2+).

Its subcellular location is the plastid. It is found in the chloroplast stroma. It carries out the reaction N(6)-carboxybiotinyl-L-lysyl-[protein] + acetyl-CoA = N(6)-biotinyl-L-lysyl-[protein] + malonyl-CoA. Its pathway is lipid metabolism; malonyl-CoA biosynthesis; malonyl-CoA from acetyl-CoA: step 1/1. Component of the acetyl coenzyme A carboxylase (ACC) complex. Biotin carboxylase (BC) catalyzes the carboxylation of biotin on its carrier protein (BCCP) and then the CO(2) group is transferred by the transcarboxylase to acetyl-CoA to form malonyl-CoA. In Atropa belladonna (Belladonna), this protein is Acetyl-coenzyme A carboxylase carboxyl transferase subunit beta, chloroplastic.